The chain runs to 846 residues: MILERNRRCQLALLMIAILAAIAGQTDAQKAAKLTAVSTCASKEKCHTCIQTEGCAWCMQPDFKGQSRCYQNTSSLCPEEFAYSPITVEQILVNNKLTNQYKAELAAGGGGSAMSGSSSSSYSSSSSSSSFYSQSSSGSSSASGYEEYSAGEIVQIQPQSMRLALRVNEKHNIKISYSQAEGYPVDLYYLMDLSKSMEDDKAKLSTLGDKLSETMKRITNNFHLGFGSFVDKVLMPYVSTIPKKLEHPCENCKAPYGYQNHMPLNNNTESFSNEVKNATVSGNLDAPEGGFDAIMQAIACRSQIGWREQARRLLVFSTDAGFHYAGDGKLGGVIAPNDGECHLSPKGEYTHSTLQDYPSISQINQKVKDNAINIIFAVTASQLSVYEKLVEHIQGSSAAKLDNDSSNVVELVKEEYRKISSSVEMKDNATGDVKITYFSSCLSNGPEVQTSKCDNLKEGQQVSFTAQIQLLKCPEDPRDWTQTIHISPVGINEVMQIQLTMLCSCPCENPGSIGYQVQANSCSGHGTSMCGICNCDDSYFGNKCECSATDLTSKFANDTSCRADSTSTTDCSGRGHCVCGACECHKRPNPIEIISGKHCECDNFSCERNRNQLCSGPDHGTCECGRCKCKPGWTGSNCGCQESNDTCMPPGGGEICSGHGTCECGVCKCTVNDQGRFSGRHCEKCPTCSGRCQELKDCVQCQMYKTGELKNGDDCARNCTQFVPVGVEKVEIDETKDEQMCKFFDEDDCKFMFKYSEQGELHVYAQENKECPAKVFMLGIVMGVIAAIVLVGLAILLLWKLLTTIHDRREFARFEKERMNAKWDTGENPIYKQATSTFKNPMYAGK.

The N-terminal stretch at 1 to 28 (MILERNRRCQLALLMIAILAAIAGQTDA) is a signal peptide. At 29–777 (QKAAKLTAVS…NKECPAKVFM (749 aa)) the chain is on the extracellular side. C46 and C55 form a disulfide bridge. N72 carries an N-linked (GlcNAc...) asparagine glycan. Residues 186 to 419 (DLYYLMDLSK…ELVKEEYRKI (234 aa)) enclose the VWFA domain. A disulfide bridge links C249 with C252. N-linked (GlcNAc...) asparagine glycans are attached at residues N266 and N277. Cysteines 300 and 341 form a disulfide. 2 N-linked (GlcNAc...) asparagine glycosylation sites follow: N403 and N428. Disulfide bonds link C441/C453, C473/C741, C507/C530, C522/C533, C535/C544, C546/C579, C561/C577, C571/C582, C584/C599, C601/C624, C606/C622, C614/C627, C629/C638, C640/C664, C647/C662, C656/C667, C669/C682, C685/C688, C692/C701, C698/C771, and C719/C749. I-EGF domains follow at residues 507 to 545 (CENPGSIGYQVQANSCSGHGTSMCGICNCDDSYFGNKCE), 546 to 600 (CSAT…KHCE), 601 to 639 (CDNFSCERNRNQLCSGPDHGTCECGRCKCKPGWTGSNCG), and 640 to 683 (CQES…RHCE). N557 carries N-linked (GlcNAc...) asparagine glycosylation. The N-linked (GlcNAc...) asparagine glycan is linked to N603. An N-linked (GlcNAc...) asparagine glycan is attached at N644. N-linked (GlcNAc...) asparagine glycosylation is present at N718. The helical transmembrane segment at 778–798 (LGIVMGVIAAIVLVGLAILLL) threads the bilayer. Topologically, residues 799-846 (WKLLTTIHDRREFARFEKERMNAKWDTGENPIYKQATSTFKNPMYAGK) are cytoplasmic. Y831 and Y843 each carry phosphotyrosine.

This sequence belongs to the integrin beta chain family. In terms of assembly, heterodimer of an alpha and a beta subunit. Beta-PS associates with either alpha-PS1, alpha-PS2, alpha-PS3, alpha-PS4 or alpha-PS5. In terms of tissue distribution, in ovaries, strongly expressed in follicle cells. In oocytes, expressed in the forming dorsal appendages (at protein level). Expressed in the embryonic dorsal cuticle, the larval eye and the wing imaginal disk. In testes, detected at the interface between somatic hub cells and cyst stem cells.

The protein localises to the cell membrane. It is found in the apical cell membrane. The protein resides in the lateral cell membrane. It localises to the basal cell membrane. Functionally, integrin alpha-PS1/beta-PS is a receptor for laminin. Integrin alpha-PS2/beta-PS is a receptor for Tig, wb and Ten-m. Contributes to endodermal integrity and adhesion between the midgut epithelium and the surrounding visceral muscle. Essential for migration of the primordial midgut cells and for maintaining, but not establishing, cell polarity in the midgut epithelium. The two beta subunits mediate midgut migration by distinct mechanisms: beta-PS requires rhea/talin and Itgbn does not. Required for rhea/talin correct cellular localization in the midgut. Required for many embryonic (dorsal closure and somatic muscle attachments) and postembryonic developmental processes (attachment between cell layers of imaginal disks, organization of ommatidial arrays and flight muscle development). Involved in the function and/or development of the olfactory system. In the testes, essential for shv-dependent maintenance of somatic hub cells and their localization to the apical tip. Plays a role in timely border cell migration during oogenesis. The protein is Integrin beta-PS (mys) of Drosophila melanogaster (Fruit fly).